Reading from the N-terminus, the 747-residue chain is Sushi domain-containing protein 1 (747 aa).

A signal peptide spans 1–29 (MGRGPWDAGPSRRLLPLLLLLGLARGAAG). The Extracellular portion of the chain corresponds to 30-721 (APGPDGLDVC…WAQVKDSSLM (692 aa)). The EGF-like 1 domain occupies 35–72 (GLDVCATCHEHATCQQREGKKICICNYGFVGNGRTQCV). Cystine bridges form between cysteine 39/cysteine 48, cysteine 42/cysteine 57, cysteine 59/cysteine 71, cysteine 77/cysteine 91, and cysteine 85/cysteine 100. One can recognise an EGF-like 2; calcium-binding domain in the interval 73-112 (DKNECQFGATLVCGNHTSCHNTPGGFYCICLEGYRATNNN). Residues asparagine 87 and asparagine 112 are each glycosylated (N-linked (GlcNAc...) asparagine). One can recognise an EGF-like 3; calcium-binding domain in the interval 125–162 (DIDECEVSGLCRHGGRCVNTHGSFECYCMDGYLPRNGP). 6 cysteine pairs are disulfide-bonded: cysteine 129–cysteine 141, cysteine 135–cysteine 150, cysteine 179–cysteine 221, cysteine 206–cysteine 234, cysteine 239–cysteine 281, and cysteine 266–cysteine 294. Sushi domains follow at residues 177 to 236 (IDCG…HCQE) and 237 to 296 (INCG…TCTE). A glycan (N-linked (GlcNAc...) asparagine) is linked at asparagine 193. A glycan (N-linked (GlcNAc...) asparagine) is linked at asparagine 253. N-linked (GlcNAc...) asparagine glycosylation is found at asparagine 348, asparagine 367, and asparagine 563. The helical transmembrane segment at 722 to 742 (LLQMAGVGLGSLAVVIILTFL) threads the bilayer. Topologically, residues 743–747 (SFSAV) are cytoplasmic.

The protein localises to the membrane. The sequence is that of Sushi domain-containing protein 1 (SUSD1) from Homo sapiens (Human).